A 134-amino-acid chain; its full sequence is Holo-[acyl-carrier-protein] synthase (134 aa).

Positions 8 and 58 each coordinate Mg(2+).

It belongs to the P-Pant transferase superfamily. AcpS family. The cofactor is Mg(2+).

The protein resides in the cytoplasm. It carries out the reaction apo-[ACP] + CoA = holo-[ACP] + adenosine 3',5'-bisphosphate + H(+). Transfers the 4'-phosphopantetheine moiety from coenzyme A to a Ser of acyl-carrier-protein. This is Holo-[acyl-carrier-protein] synthase from Acidiphilium cryptum (strain JF-5).